We begin with the raw amino-acid sequence, 317 residues long: Ribosomal protein L11 methyltransferase (317 aa).

4 residues coordinate S-adenosyl-L-methionine: T158, G179, D201, and N244.

It belongs to the methyltransferase superfamily. PrmA family.

The protein localises to the cytoplasm. The catalysed reaction is L-lysyl-[protein] + 3 S-adenosyl-L-methionine = N(6),N(6),N(6)-trimethyl-L-lysyl-[protein] + 3 S-adenosyl-L-homocysteine + 3 H(+). Functionally, methylates ribosomal protein L11. The sequence is that of Ribosomal protein L11 methyltransferase from Streptococcus pyogenes serotype M28 (strain MGAS6180).